A 52-amino-acid chain; its full sequence is Insulin (52 aa).

3 disulfide bridges follow: Cys-9/Cys-38, Cys-21/Cys-51, and Cys-37/Cys-42.

It belongs to the insulin family. As to quaternary structure, heterodimer of a B chain and an A chain linked by two disulfide bonds.

The protein localises to the secreted. In terms of biological role, insulin decreases blood glucose concentration. It increases cell permeability to monosaccharides, amino acids and fatty acids. It accelerates glycolysis, the pentose phosphate cycle, and glycogen synthesis in liver. The protein is Insulin (ins) of Piaractus mesopotamicus (Small-scaled pacu).